The primary structure comprises 116 residues: Ribonuclease P protein component (116 aa).

The protein belongs to the RnpA family. As to quaternary structure, consists of a catalytic RNA component (M1 or rnpB) and a protein subunit.

It catalyses the reaction Endonucleolytic cleavage of RNA, removing 5'-extranucleotides from tRNA precursor.. Functionally, RNaseP catalyzes the removal of the 5'-leader sequence from pre-tRNA to produce the mature 5'-terminus. It can also cleave other RNA substrates such as 4.5S RNA. The protein component plays an auxiliary but essential role in vivo by binding to the 5'-leader sequence and broadening the substrate specificity of the ribozyme. This Exiguobacterium sibiricum (strain DSM 17290 / CCUG 55495 / CIP 109462 / JCM 13490 / 255-15) protein is Ribonuclease P protein component.